The sequence spans 89 residues: Small ribosomal subunit protein uS15 (89 aa).

The tract at residues 1-23 is disordered; that stretch reads MSLDTTEKQQLINANQTHGTDTG. Positions 8 to 23 are enriched in polar residues; that stretch reads KQQLINANQTHGTDTG.

It belongs to the universal ribosomal protein uS15 family. As to quaternary structure, part of the 30S ribosomal subunit. Forms a bridge to the 50S subunit in the 70S ribosome, contacting the 23S rRNA.

One of the primary rRNA binding proteins, it binds directly to 16S rRNA where it helps nucleate assembly of the platform of the 30S subunit by binding and bridging several RNA helices of the 16S rRNA. Functionally, forms an intersubunit bridge (bridge B4) with the 23S rRNA of the 50S subunit in the ribosome. The polypeptide is Small ribosomal subunit protein uS15 (Prochlorococcus marinus (strain MIT 9313)).